The sequence spans 116 residues: Large ribosomal subunit protein uL22 (116 aa).

It belongs to the universal ribosomal protein uL22 family. Part of the 50S ribosomal subunit.

In terms of biological role, this protein binds specifically to 23S rRNA; its binding is stimulated by other ribosomal proteins, e.g. L4, L17, and L20. It is important during the early stages of 50S assembly. It makes multiple contacts with different domains of the 23S rRNA in the assembled 50S subunit and ribosome. The globular domain of the protein is located near the polypeptide exit tunnel on the outside of the subunit, while an extended beta-hairpin is found that lines the wall of the exit tunnel in the center of the 70S ribosome. This is Large ribosomal subunit protein uL22 from Leptospira biflexa serovar Patoc (strain Patoc 1 / Ames).